We begin with the raw amino-acid sequence, 283 residues long: Small ribosomal subunit protein uS3 (283 aa).

The region spanning 39 to 107 (VRAYLKTKLK…PVHVNIEEIR (69 aa)) is the KH type-2 domain. The segment at 219–283 (ASDDDKKRRG…AAVSAEKAGE (65 aa)) is disordered. Positions 221–236 (DDDKKRRGPRRDDGKP) are enriched in basic and acidic residues. A compositionally biased stretch (low complexity) spans 237-260 (SGRPRAPRPEGQPGAAAPGSAPAA).

The protein belongs to the universal ribosomal protein uS3 family. As to quaternary structure, part of the 30S ribosomal subunit. Forms a tight complex with proteins S10 and S14.

Functionally, binds the lower part of the 30S subunit head. Binds mRNA in the 70S ribosome, positioning it for translation. This is Small ribosomal subunit protein uS3 from Janthinobacterium sp. (strain Marseille) (Minibacterium massiliensis).